A 524-amino-acid chain; its full sequence is Bifunctional purine biosynthesis protein PurH (524 aa).

The region spanning 1–144 (MTRRALVSVS…KNSAHVGVVV (144 aa)) is the MGS-like domain.

It belongs to the PurH family.

It catalyses the reaction (6R)-10-formyltetrahydrofolate + 5-amino-1-(5-phospho-beta-D-ribosyl)imidazole-4-carboxamide = 5-formamido-1-(5-phospho-D-ribosyl)imidazole-4-carboxamide + (6S)-5,6,7,8-tetrahydrofolate. The catalysed reaction is IMP + H2O = 5-formamido-1-(5-phospho-D-ribosyl)imidazole-4-carboxamide. It participates in purine metabolism; IMP biosynthesis via de novo pathway; 5-formamido-1-(5-phospho-D-ribosyl)imidazole-4-carboxamide from 5-amino-1-(5-phospho-D-ribosyl)imidazole-4-carboxamide (10-formyl THF route): step 1/1. The protein operates within purine metabolism; IMP biosynthesis via de novo pathway; IMP from 5-formamido-1-(5-phospho-D-ribosyl)imidazole-4-carboxamide: step 1/1. The sequence is that of Bifunctional purine biosynthesis protein PurH from Anaeromyxobacter dehalogenans (strain 2CP-1 / ATCC BAA-258).